Consider the following 82-residue polypeptide: DNA-directed RNA polymerase subunit omega (82 aa).

This sequence belongs to the RNA polymerase subunit omega family. As to quaternary structure, in cyanobacteria the RNAP catalytic core is composed of 2 alpha, 1 beta, 1 beta', 1 gamma and 1 omega subunit. When a sigma factor is associated with the core the holoenzyme is formed, which can initiate transcription.

The enzyme catalyses RNA(n) + a ribonucleoside 5'-triphosphate = RNA(n+1) + diphosphate. Promotes RNA polymerase assembly. Latches the N- and C-terminal regions of the beta' subunit thereby facilitating its interaction with the beta and alpha subunits. In Synechococcus sp. (strain CC9902), this protein is DNA-directed RNA polymerase subunit omega.